Here is a 413-residue protein sequence, read N- to C-terminus: Isocitrate dehydrogenase [NADP] (413 aa).

NADP(+) is bound by residues 78 to 80 (TIT) and R85. Position 80 (T80) interacts with substrate. Substrate is bound by residues 97–103 (SPNGTIR), R112, R135, and K215. D255 contributes to the Mn(2+) binding site. NADP(+) is bound at residue K263. Mn(2+)-binding residues include D278 and D282. NADP(+) contacts are provided by residues 313–318 (GTVTRH) and N331.

This sequence belongs to the isocitrate and isopropylmalate dehydrogenases family. Heterodimer. Mg(2+) serves as cofactor. Requires Mn(2+) as cofactor. In terms of tissue distribution, leaves, nodules and roots with the relative amount of 1:3.4:7.7.

It is found in the cytoplasm. The catalysed reaction is D-threo-isocitrate + NADP(+) = 2-oxoglutarate + CO2 + NADPH. Functionally, may supply 2-oxoglutarate for amino acid biosynthesis and ammonia assimilation via the glutamine synthetase/glutamate synthase (GS/GOGAT) pathway. The chain is Isocitrate dehydrogenase [NADP] (IDH1) from Glycine max (Soybean).